The sequence spans 436 residues: Transcriptional regulator STP3 (436 aa).

The segment at 204–277 is disordered; the sequence is EPLDDEFVPP…TKRKYTKKKQ (74 aa). Residues 230–265 show a composition bias toward low complexity; that stretch reads ISPPASSDSSSSSSYVPQLIPSSSSSVTSNGDSPVS. The span at 268 to 277 shows a compositional bias: basic residues; sequence TKRKYTKKKQ. The C2H2-type zinc-finger motif lies at 315 to 337; it reads FDCPSCDASFKVKGYLTRHLKKH.

In terms of processing, activated by the amino acid-induced proteolytic removal of an N-terminal inhibitory domain.

The protein localises to the cell membrane. The protein resides in the nucleus. Functionally, transcription factor that activates genes required for degradation of extracellular protein and uptake of peptides such as the secreted aspartyl protease SAP2 or the oligopeptide transporter OPT1. Required for virulence. Synthesized as latent cytoplasmic precursor, which, upon a signal initiated by the plasma membrane SPS amino acid sensor system (including CSY1 and CSH3), becomes proteolytically activated and relocates to the nucleus, where it induces the expression of SPS-sensor-regulated genes. This Candida albicans (strain SC5314 / ATCC MYA-2876) (Yeast) protein is Transcriptional regulator STP3 (STP3).